The chain runs to 517 residues: Fatty acyl-CoA reductase wat (517 aa).

A run of 2 helical transmembrane segments spans residues 378–398 and 492–512; these read ILCFLYHTLPALVMDAIMVII and VLHYTTLAVFYALAAWALYAL.

It belongs to the fatty acyl-CoA reductase family.

It localises to the apical cell membrane. The enzyme catalyses a long-chain fatty acyl-CoA + 2 NADPH + 2 H(+) = a long-chain primary fatty alcohol + 2 NADP(+) + CoA. Functionally, catalyzes the reduction of saturated fatty acyl-CoA to fatty alcohols. The preferred substrates are C24:0 and C26:0. Necessary for the final stages of tracheal maturation, to facilitate the transition from water-filled to gas-filled tubes. May help to maintain the integrity of the outer hydrophobic envelope of the trachea. The polypeptide is Fatty acyl-CoA reductase wat (Drosophila melanogaster (Fruit fly)).